The sequence spans 367 residues: Peptide chain release factor 2 (367 aa).

N5-methylglutamine is present on Gln250.

This sequence belongs to the prokaryotic/mitochondrial release factor family. In terms of processing, methylated by PrmC. Methylation increases the termination efficiency of RF2.

It is found in the cytoplasm. Peptide chain release factor 2 directs the termination of translation in response to the peptide chain termination codons UGA and UAA. The chain is Peptide chain release factor 2 from Saccharopolyspora erythraea (strain ATCC 11635 / DSM 40517 / JCM 4748 / NBRC 13426 / NCIMB 8594 / NRRL 2338).